The sequence spans 39 residues: Cytochrome b6-f complex subunit 5 (39 aa).

The chain crosses the membrane as a helical span at residues 5–25 (LLCGIVLGLVPITLLGLFVSA).

It belongs to the PetG family. The 4 large subunits of the cytochrome b6-f complex are cytochrome b6, subunit IV (17 kDa polypeptide, PetD), cytochrome f and the Rieske protein, while the 4 small subunits are PetG, PetL, PetM and PetN. The complex functions as a dimer.

The protein localises to the cellular thylakoid membrane. Its function is as follows. Component of the cytochrome b6-f complex, which mediates electron transfer between photosystem II (PSII) and photosystem I (PSI), cyclic electron flow around PSI, and state transitions. PetG is required for either the stability or assembly of the cytochrome b6-f complex. This chain is Cytochrome b6-f complex subunit 5, found in Prochlorococcus marinus subsp. pastoris (strain CCMP1986 / NIES-2087 / MED4).